The primary structure comprises 872 residues: Alanine--tRNA ligase (872 aa).

His-567, His-571, Cys-669, and His-673 together coordinate Zn(2+).

It belongs to the class-II aminoacyl-tRNA synthetase family. Zn(2+) is required as a cofactor.

The protein localises to the cytoplasm. It catalyses the reaction tRNA(Ala) + L-alanine + ATP = L-alanyl-tRNA(Ala) + AMP + diphosphate. Functionally, catalyzes the attachment of alanine to tRNA(Ala) in a two-step reaction: alanine is first activated by ATP to form Ala-AMP and then transferred to the acceptor end of tRNA(Ala). Also edits incorrectly charged Ser-tRNA(Ala) and Gly-tRNA(Ala) via its editing domain. In Streptococcus pyogenes serotype M6 (strain ATCC BAA-946 / MGAS10394), this protein is Alanine--tRNA ligase.